The primary structure comprises 194 residues: Peptidyl-tRNA hydrolase (194 aa).

TRNA is bound at residue Tyr-17. The active-site Proton acceptor is His-22. Residues Tyr-68, Asn-70, and Asn-116 each contribute to the tRNA site.

This sequence belongs to the PTH family. As to quaternary structure, monomer.

Its subcellular location is the cytoplasm. It catalyses the reaction an N-acyl-L-alpha-aminoacyl-tRNA + H2O = an N-acyl-L-amino acid + a tRNA + H(+). Hydrolyzes ribosome-free peptidyl-tRNAs (with 1 or more amino acids incorporated), which drop off the ribosome during protein synthesis, or as a result of ribosome stalling. In terms of biological role, catalyzes the release of premature peptidyl moieties from peptidyl-tRNA molecules trapped in stalled 50S ribosomal subunits, and thus maintains levels of free tRNAs and 50S ribosomes. The polypeptide is Peptidyl-tRNA hydrolase (Pseudomonas entomophila (strain L48)).